The following is a 450-amino-acid chain: Trehalose/maltose-binding protein MalE (450 aa).

A signal peptide spans 1–24 (MNVKKVLLGLFLVGVLGIAVVASG). Residues glutamate 57, threonine 84, arginine 89, aspartate 110, tyrosine 161, aspartate 163, tyrosine 217, glutamate 279, tryptophan 297, tyrosine 299, glycine 334, tryptophan 335, tryptophan 371, and arginine 404 each coordinate alpha,alpha-trehalose.

This sequence belongs to the bacterial solute-binding protein 1 family. As to quaternary structure, the complex is composed of two ATP-binding proteins (MalK), two transmembrane proteins (MalG and MalF) and a solute-binding protein (MalE). In terms of processing, glycosylated.

Its subcellular location is the cell membrane. Functionally, part of the ABC transporter complex MalEFGK involved in trehalose/maltose import. Binds maltose and trehalose. The sequence is that of Trehalose/maltose-binding protein MalE (malE) from Thermococcus litoralis (strain ATCC 51850 / DSM 5473 / JCM 8560 / NS-C).